The chain runs to 506 residues: Histidine ammonia-lyase (506 aa).

Positions 143-145 (ASG) form a cross-link, 5-imidazolinone (Ala-Gly). Ser-144 is subject to 2,3-didehydroalanine (Ser).

It belongs to the PAL/histidase family. In terms of processing, contains an active site 4-methylidene-imidazol-5-one (MIO), which is formed autocatalytically by cyclization and dehydration of residues Ala-Ser-Gly.

The protein resides in the cytoplasm. The catalysed reaction is L-histidine = trans-urocanate + NH4(+). Its pathway is amino-acid degradation; L-histidine degradation into L-glutamate; N-formimidoyl-L-glutamate from L-histidine: step 1/3. The sequence is that of Histidine ammonia-lyase from Salmonella dublin (strain CT_02021853).